Here is a 349-residue protein sequence, read N- to C-terminus: Fe(3+) ions import ATP-binding protein FbpC (349 aa).

The ABC transporter domain maps to 4 to 236; the sequence is LELHHIGKSY…PVDEPTATFL (233 aa). ATP is bound at residue 36-43; sequence GPSGSGKT.

This sequence belongs to the ABC transporter superfamily. Fe(3+) ion importer (TC 3.A.1.10) family. In terms of assembly, the complex is composed of two ATP-binding proteins (FbpC), two transmembrane proteins (FbpB) and a solute-binding protein (FbpA).

The protein resides in the cell inner membrane. The catalysed reaction is Fe(3+)(out) + ATP + H2O = Fe(3+)(in) + ADP + phosphate + H(+). In terms of biological role, part of the ABC transporter complex FbpABC involved in Fe(3+) ions import. Responsible for energy coupling to the transport system. The sequence is that of Fe(3+) ions import ATP-binding protein FbpC from Yersinia pestis bv. Antiqua (strain Antiqua).